The primary structure comprises 393 residues: MGYYSLTEITAVQYAKDHGYFEEKANVICHEIGDGNLNYVFKLDDGEKSIIIKQALPYAKVVGESWPLSIKRATIESKALQIFAQYVPDYVPVVYSHDEELAITVIEDLSRLTITRKGLIDGEEYPLLSQHIGRFLAHVLFYTSDFGLQSEEKRILEGTFVNPDLCKITEDLVFTDPFGHYDTNDYEPDLQLVVDELWSDKTLKLKVAQYKYKFLTRKETLIHGDLHTGSIFSSPSETKVIDPEFATYGPFGFDIGQFIANLLLNALSREEEKRSVLFFHIEKTWSYFVETFTKLWIGEGVEAYTKEKQWLPIILQNIFTDAVGFAGCELIRRTIGLAHVADLDEIENKETRIQAKKQALSLGKELIKYESKSADIQLFRTLFQQTVSRGVKA.

ATP contacts are provided by residues asparagine 38, lysine 53, and glutamate 107–leucine 109. Position 225 (aspartate 225) interacts with substrate. Aspartate 242 to glutamate 244 is a binding site for ATP. Residue arginine 332 coordinates substrate.

This sequence belongs to the methylthioribose kinase family. Homodimer.

The catalysed reaction is 5-(methylsulfanyl)-D-ribose + ATP = 5-(methylsulfanyl)-alpha-D-ribose 1-phosphate + ADP + H(+). It participates in amino-acid biosynthesis; L-methionine biosynthesis via salvage pathway; S-methyl-5-thio-alpha-D-ribose 1-phosphate from S-methyl-5'-thioadenosine (hydrolase route): step 2/2. In terms of biological role, catalyzes the phosphorylation of methylthioribose into methylthioribose-1-phosphate. The chain is Methylthioribose kinase from Bacillus cereus (strain B4264).